The sequence spans 587 residues: MAEYVNYVLGSLYVSDTATSTIPTDVRNFIAPPFPLNFWSGPTFTVSSNTRADPLKLVAARHRAAAAAIDTLEAQSQYGVANVDALIRPLERQVAKVADALAALEDAARAAESADAATPQVNASEADQRPDNIGQSLSEIQIAKNDVPMEFDTNLAVDLLATVFVSRAAGGSNGVVFGTWYRALQDRLVTERPVATRSIDYRDGRMSKTFMTTAVVSLQSCGRLYIGNRPYSAFEAAVLCLHLAHRAVNSNYTYPTSFSGLIEQLPVYIEAFSTALGDGTLGKVGYEFNGARLPKNQFHVPGGGGRYERGALNGHGVLETLIRLKVLPAIPGSLGTTSTAVGPELDADQTAYIDDVNKAAAAFLVRAQNLFLTEDQTLLRSTINTITALLLLRRLLWNGNVYTDRLRNNFQLGAIVPNLAVSQRDARGASGGDAAAMVSRSGNNNFTFLCERYVSPIYIANREVELTQLFPGLAALCLDAQTVARDQPQHRAVNVSTGRNQTNLTRLIGIELENRRRTAPVPINEVLAAHDAVALQYERGLGLLMQKPRLRASLEETRRLGQFNVASDYDLLYFVCLGYIPSLTSAM.

The tract at residues 1-53 is interaction with major capsid protein/MCP; sequence MAEYVNYVLGSLYVSDTATSTIPTDVRNFIAPPFPLNFWSGPTFTVSSNTRAD. The segment at 113–132 is disordered; that stretch reads SADAATPQVNASEADQRPDN.

This sequence belongs to the herpesviridae CVC2 protein family. As to quaternary structure, heterodimerizes with CVC1. Interacts with major capsid protein/MCP and triplex capsid protein 1/TRX1 at the pentamer vertices. Interacts with the large tegument protein/LTP.

The protein localises to the virion. It is found in the host nucleus. Its function is as follows. Capsid vertex-specific component that plays a role during viral DNA encapsidation, assuring correct genome cleavage and presumably stabilizing capsids that contain full-length viral genomes. Participates in the interaction between the capsid and the tegument through interaction with the large tegument protein/LTP. In Equine herpesvirus 1 (strain Ab4p) (EHV-1), this protein is Capsid vertex component 2.